The sequence spans 428 residues: Serine--tRNA ligase (428 aa).

An L-serine-binding site is contributed by 235–237 (TAE). Position 266–268 (266–268 (RYE)) interacts with ATP. Glu-289 contacts L-serine. 353 to 356 (EVSS) contributes to the ATP binding site. Residue Ser-389 participates in L-serine binding.

It belongs to the class-II aminoacyl-tRNA synthetase family. Type-1 seryl-tRNA synthetase subfamily. Homodimer. The tRNA molecule binds across the dimer.

It localises to the cytoplasm. The catalysed reaction is tRNA(Ser) + L-serine + ATP = L-seryl-tRNA(Ser) + AMP + diphosphate + H(+). It carries out the reaction tRNA(Sec) + L-serine + ATP = L-seryl-tRNA(Sec) + AMP + diphosphate + H(+). It participates in aminoacyl-tRNA biosynthesis; selenocysteinyl-tRNA(Sec) biosynthesis; L-seryl-tRNA(Sec) from L-serine and tRNA(Sec): step 1/1. Its function is as follows. Catalyzes the attachment of serine to tRNA(Ser). Is also able to aminoacylate tRNA(Sec) with serine, to form the misacylated tRNA L-seryl-tRNA(Sec), which will be further converted into selenocysteinyl-tRNA(Sec). The protein is Serine--tRNA ligase of Blochmanniella pennsylvanica (strain BPEN).